A 1133-amino-acid polypeptide reads, in one-letter code: MKRKVQKIIDEAPLEENSPPRFFDSDVEADSKPNDLTAANSIVDLKTNSQHENANAAGKEYGDSGVSESWVLDFLSVTGEKTISEFLAQKIWKTSNGDLNVAVDMYFDESFNIKNSNPDSESQKDTDASLTQMDQLSNTVSVKDLSINRNTNKKALNAVSPSLNLSSNSSVQDVSIDKEEMMKKQSRNALTPLDFIMKKNELMKYIGCFGVEAYSTASGTRTLQAGERIYLERQKLSIKSQSRNSRKKSKLLSINSSCYSNIVRFCNSDHHEIGKLPTEVASVISTLMEQGFWSFEAICIYSDNIIRFGSNVTLQVYCFINVNHPSLNRSPFTLATNSMQEEEEHLKASFAQNKRDHLLRLFTWIALEPDLEDCNTKESIHIDDILKTSSLPEARDESNSDLTPSSTEDEEDVVSDQLAILYDKVKTSGAELPSAPKPSTFALDLREYQKQALYWMCCKEEGVQSDGSAPKLHPLWSRFRFPKDSEFPEFFKCSSDDDNTHFYVNLYTGETTMLFPNSMPYHRGGILADEMGLGKTIEVLSLIHSRPCFSTDEIPEAFRHSKPSLPVASRTTLVVAPMSLLDQWHSEACKVSQGTKFRSMIYYGSEKPLDLKSCVIDTSTAPLIIITSYGVLLSEFSQQSHSSGLFSVHWFRVVLDEGHNIRNRESKTAKACHSISSQNRWVITGTPIVNKLDDLYSLIKFMRYEPWCNYTYWQTFVSLPYQSKDVLKALNVVQSILEFLVLRRTKETKDRNGNSIVTLPPKTVKIEYLDFSDSERKIYDSLYTKAKSTVNANIVAGTLFRNYTTILGLLLRLRQACCDPVLLSNMTINSETFDDFEFSVEQFNSLINQFVVTGKPIPSDILKIDTLKSFEALITECPICCNEPIQNPLLLNCKHACCGDCLSEHIQYQKRRNIIPPLCHTCRQPFNEQDVYKPFFVKNNGTQSTLLVGEEVKWKYWNRLQSVKLNGLLGQLRQLTHSSEPEKVVIFSQFTTFLDIIADVLESEKMGYARFDGTMSQQMRSTALETFRNDPDVNVLIISLKAGGVGLNLTCANHVFIMDPWWSWSVEAQAIDRIHRLGQEKPVFVTRYIVRDTVEERMLKIQERKNFITGTLGMSEGKQQVQSIEDIKMLFEY.

2 disordered regions span residues 1-34 (MKRK…SKPN) and 392-413 (PEAR…EEDV). Position 18 is a phosphoserine (S18). The region spanning 516-705 (PNSMPYHRGG…YSLIKFMRYE (190 aa)) is the Helicase ATP-binding domain. An ATP-binding site is contributed by 529-536 (DEMGLGKT). The DEGH box signature appears at 656 to 659 (DEGH). The RING-type zinc finger occupies 877-923 (CPICCNEPIQNPLLLNCKHACCGDCLSEHIQYQKRRNIIPPLCHTCR). The Helicase C-terminal domain occupies 971–1125 (QLRQLTHSSE…EGKQQVQSIE (155 aa)).

The protein belongs to the SNF2/RAD54 helicase family.

The protein resides in the cytoplasm. The protein localises to the nucleus. Functionally, probable helicase, member of the UBC2/RAD6 epistasis group. Functions with DNA repair protein rad18 in error-free postreplication DNA repair. Involved in the maintenance of wild-type rates of instability of simple repetitive sequences such as poly(GT) repeats. Plays a role in surviving topoisomerase-mediated DNA damage. The chain is DNA repair protein rad8 from Schizosaccharomyces pombe (strain 972 / ATCC 24843) (Fission yeast).